The sequence spans 300 residues: Ribosomal protein bS6--L-glutamate ligase (300 aa).

The ATP-grasp domain maps to Met104–Glu287. ATP is bound by residues Lys141, Glu178–Tyr179, Asp187, and Arg211–Asn213. Residues Asp248, Glu260, and Asn262 each coordinate Mg(2+). Mn(2+) contacts are provided by Asp248, Glu260, and Asn262.

Belongs to the RimK family. Mg(2+) is required as a cofactor. Requires Mn(2+) as cofactor.

In terms of biological role, an L-glutamate ligase that catalyzes the ATP-dependent post-translational addition of glutamate residues to the C-terminus of ribosomal protein bS6 (RpsF). Is also able to catalyze the synthesis of poly-alpha-glutamate in vitro, via ATP hydrolysis from unprotected glutamate as substrate. The number of glutamate residues added to either RpsF or to poly-alpha-glutamate changes with pH. The chain is Ribosomal protein bS6--L-glutamate ligase from Shigella flexneri serotype 5b (strain 8401).